Reading from the N-terminus, the 96-residue chain is MSRRCELTGKAVLTGHLVSHSNRKTKRRFLPNLCNVTLLSDTLGRSVRLRISANALRSVEHRGGLDAFLVKAGEQDLSQNARLLKREIEKKLAAAA.

This sequence belongs to the bacterial ribosomal protein bL28 family.

This chain is Large ribosomal subunit protein bL28, found in Methylobacterium sp. (strain 4-46).